We begin with the raw amino-acid sequence, 182 residues long: UPF0397 protein SAG1634 (182 aa).

A run of 5 helical transmembrane segments spans residues 9-29 (VVAT…VNIP), 42-62 (AVLA…TGFI), 74-94 (SPWW…GFFA), 109-129 (LLLF…VVAP), and 148-168 (FLSS…LLLA).

The protein belongs to the UPF0397 family.

The protein resides in the cell membrane. This is UPF0397 protein SAG1634 from Streptococcus agalactiae serotype V (strain ATCC BAA-611 / 2603 V/R).